Here is an 874-residue protein sequence, read N- to C-terminus: Alanine--tRNA ligase (874 aa).

Zn(2+) contacts are provided by H562, H566, C665, and H669.

This sequence belongs to the class-II aminoacyl-tRNA synthetase family. It depends on Zn(2+) as a cofactor.

It is found in the cytoplasm. The enzyme catalyses tRNA(Ala) + L-alanine + ATP = L-alanyl-tRNA(Ala) + AMP + diphosphate. Its function is as follows. Catalyzes the attachment of alanine to tRNA(Ala) in a two-step reaction: alanine is first activated by ATP to form Ala-AMP and then transferred to the acceptor end of tRNA(Ala). Also edits incorrectly charged Ser-tRNA(Ala) and Gly-tRNA(Ala) via its editing domain. This is Alanine--tRNA ligase from Pseudomonas savastanoi pv. phaseolicola (strain 1448A / Race 6) (Pseudomonas syringae pv. phaseolicola (strain 1448A / Race 6)).